A 189-amino-acid polypeptide reads, in one-letter code: Phosphoheptose isomerase (189 aa).

An SIS domain is found at 34–189; sequence LVDALGNGKK…CDLLEKRLFG (156 aa). Position 49–51 (49–51) interacts with substrate; the sequence is NGG. Residues His-58 and Glu-62 each contribute to the Zn(2+) site. Residues Glu-62, 91-92, 117-119, Ser-122, and Gln-169 contribute to the substrate site; these read ND and STS. The Zn(2+) site is built by Gln-169 and His-177.

The protein belongs to the SIS family. GmhA subfamily. Homotetramer. It depends on Zn(2+) as a cofactor.

Its subcellular location is the cytoplasm. It catalyses the reaction 2 D-sedoheptulose 7-phosphate = D-glycero-alpha-D-manno-heptose 7-phosphate + D-glycero-beta-D-manno-heptose 7-phosphate. It participates in carbohydrate biosynthesis; D-glycero-D-manno-heptose 7-phosphate biosynthesis; D-glycero-alpha-D-manno-heptose 7-phosphate and D-glycero-beta-D-manno-heptose 7-phosphate from sedoheptulose 7-phosphate: step 1/1. Functionally, catalyzes the isomerization of sedoheptulose 7-phosphate in D-glycero-D-manno-heptose 7-phosphate. The sequence is that of Phosphoheptose isomerase from Geotalea uraniireducens (strain Rf4) (Geobacter uraniireducens).